Here is a 140-residue protein sequence, read N- to C-terminus: uncharacterized protein (140 aa).

ATP is bound at residue 18-25 (GTNGSGKS).

This is an uncharacterized protein from Haemophilus influenzae (strain ATCC 51907 / DSM 11121 / KW20 / Rd).